The chain runs to 395 residues: N5-carboxyaminoimidazole ribonucleotide synthase (395 aa).

ATP is bound by residues K109, K149, 184-187, E192, and 268-269; these read EEFI and NE. Residues 113–298 form the ATP-grasp domain; it reads RQLLTRLGLP…QFEQQLRAIA (186 aa).

This sequence belongs to the PurK/PurT family. In terms of assembly, homodimer.

The enzyme catalyses 5-amino-1-(5-phospho-beta-D-ribosyl)imidazole + hydrogencarbonate + ATP = 5-carboxyamino-1-(5-phospho-D-ribosyl)imidazole + ADP + phosphate + 2 H(+). It functions in the pathway purine metabolism; IMP biosynthesis via de novo pathway; 5-amino-1-(5-phospho-D-ribosyl)imidazole-4-carboxylate from 5-amino-1-(5-phospho-D-ribosyl)imidazole (N5-CAIR route): step 1/2. Its function is as follows. Catalyzes the ATP-dependent conversion of 5-aminoimidazole ribonucleotide (AIR) and HCO(3)(-) to N5-carboxyaminoimidazole ribonucleotide (N5-CAIR). This is N5-carboxyaminoimidazole ribonucleotide synthase from Synechococcus elongatus (strain ATCC 33912 / PCC 7942 / FACHB-805) (Anacystis nidulans R2).